A 387-amino-acid polypeptide reads, in one-letter code: Acetylajmalan esterase (387 aa).

An N-terminal signal peptide occupies residues 1–22 (MGFARLLHLVFSLLVFAGITNG). The active-site Nucleophile is the serine 36. Asparagine 98, asparagine 180, asparagine 199, asparagine 249, and asparagine 296 each carry an N-linked (GlcNAc...) asparagine glycan. Active-site residues include aspartate 337 and histidine 340.

The protein belongs to the 'GDSL' lipolytic enzyme family.

It carries out the reaction 17-O-acetylajmaline + H2O = ajmaline + acetate + H(+). The enzyme catalyses 17-O-acetylnorajmaline + H2O = norajmaline + acetate + H(+). It functions in the pathway alkaloid biosynthesis; ajmaline biosynthesis. In terms of biological role, acetylesterase involved in the biosynthesis of ajmaline-type monoterpenoid indole alkaloids (MIAs) natural products, important plant-derived pharmaceuticals used in the therapy of heart disorders. Deacetylates 17-O-acetylajmaline and 17-O-acetylnorajmaline to produce ajmaline and norajmaline, but is inactive toward other acetylated alkaloids. The chain is Acetylajmalan esterase from Rauvolfia serpentina (Serpentine wood).